A 101-amino-acid polypeptide reads, in one-letter code: Urease subunit beta (101 aa).

Belongs to the urease beta subunit family. As to quaternary structure, heterotrimer of UreA (gamma), UreB (beta) and UreC (alpha) subunits. Three heterotrimers associate to form the active enzyme.

It is found in the cytoplasm. The enzyme catalyses urea + 2 H2O + H(+) = hydrogencarbonate + 2 NH4(+). The protein operates within nitrogen metabolism; urea degradation; CO(2) and NH(3) from urea (urease route): step 1/1. In Burkholderia ambifaria (strain MC40-6), this protein is Urease subunit beta.